Here is a 475-residue protein sequence, read N- to C-terminus: Ribulose bisphosphate carboxylase large chain (475 aa).

The propeptide occupies 1-2; sequence MA. At P3 the chain carries N-acetylproline. N6,N6,N6-trimethyllysine is present on K14. The substrate site is built by N123 and T173. The active-site Proton acceptor is the K175. K177 lines the substrate pocket. Residues K201, D203, and E204 each contribute to the Mg(2+) site. Position 201 is an N6-carboxylysine (K201). The active-site Proton acceptor is H294. 3 residues coordinate substrate: R295, H327, and S379.

The protein belongs to the RuBisCO large chain family. Type I subfamily. In terms of assembly, heterohexadecamer of 8 large chains and 8 small chains. It depends on Mg(2+) as a cofactor.

Its subcellular location is the plastid. It is found in the chloroplast. The enzyme catalyses 2 (2R)-3-phosphoglycerate + 2 H(+) = D-ribulose 1,5-bisphosphate + CO2 + H2O. It catalyses the reaction D-ribulose 1,5-bisphosphate + O2 = 2-phosphoglycolate + (2R)-3-phosphoglycerate + 2 H(+). Functionally, ruBisCO catalyzes two reactions: the carboxylation of D-ribulose 1,5-bisphosphate, the primary event in carbon dioxide fixation, as well as the oxidative fragmentation of the pentose substrate in the photorespiration process. Both reactions occur simultaneously and in competition at the same active site. The sequence is that of Ribulose bisphosphate carboxylase large chain from Nephroselmis olivacea (Green alga).